Consider the following 291-residue polypeptide: N-acetylmannosamine kinase (291 aa).

ATP-binding positions include 5–12 and 132–139; these read AIDIGGTK and GVGGGVVS. Residues His-156, Cys-166, Cys-168, and Cys-173 each coordinate Zn(2+).

This sequence belongs to the ROK (NagC/XylR) family. NanK subfamily. Homodimer.

The catalysed reaction is an N-acyl-D-mannosamine + ATP = an N-acyl-D-mannosamine 6-phosphate + ADP + H(+). It participates in amino-sugar metabolism; N-acetylneuraminate degradation; D-fructose 6-phosphate from N-acetylneuraminate: step 2/5. Catalyzes the phosphorylation of N-acetylmannosamine (ManNAc) to ManNAc-6-P. In Escherichia coli O139:H28 (strain E24377A / ETEC), this protein is N-acetylmannosamine kinase.